The sequence spans 315 residues: Epithelial cell adhesion molecule (315 aa).

Positions 1-23 are cleaved as a signal peptide; the sequence is MAPPKALAFGLLLAVVTATLAAA. The Extracellular portion of the chain corresponds to 24 to 266; sequence QKDCVCNNYK…APEFSMQGLT (243 aa). 6 disulfides stabilise this stretch: Cys-27–Cys-46, Cys-29–Cys-59, Cys-38–Cys-48, Cys-66–Cys-99, Cys-110–Cys-116, and Cys-118–Cys-135. The Thyroglobulin type-1 domain maps to 63-135; that stretch reads ASKCLVMKAE…RTDKDTEITC (73 aa). The N-linked (GlcNAc...) asparagine glycan is linked to Asn-111. A glycan (N-linked (GlcNAc...) asparagine) is linked at Asn-198. A helical membrane pass occupies residues 267–289; that stretch reads AGIIAVIVVVVLAVIAGIVVLVI. Topologically, residues 290 to 315 are cytoplasmic; that stretch reads STRKRSAKYEKAEIKEMGEIHRELNA.

Belongs to the EPCAM family. Monomer. Interacts with phosphorylated CLDN7. Post-translationally, glycosylation at Asn-198 is crucial for protein stability.

It localises to the lateral cell membrane. The protein localises to the cell junction. The protein resides in the tight junction. Its function is as follows. May act as a physical homophilic interaction molecule between intestinal epithelial cells (IECs) and intraepithelial lymphocytes (IELs) at the mucosal epithelium for providing immunological barrier as a first line of defense against mucosal infection. Plays a role in embryonic stem cells proliferation and differentiation. Up-regulates the expression of FABP5, MYC and cyclins A and E. The chain is Epithelial cell adhesion molecule (Epcam) from Rattus norvegicus (Rat).